Consider the following 323-residue polypeptide: Dehydrogenase/reductase SDR family member 7B (323 aa).

The Cytoplasmic portion of the chain corresponds to 1-17; sequence MISPSFRKGMLKERVMD. A helical; Signal-anchor for type II membrane protein transmembrane segment spans residues 18–38; it reads LASQTTILPLLFGCLGIFSLF. Residues 39 to 323 lie on the Lumenal side of the membrane; it reads RLLQRIRSKA…ARKERKSKSS (285 aa). Positions 62 and 64 each coordinate NAD(+). S192 contributes to the substrate binding site. 3 residues coordinate NAD(+): Y205, K209, and T240. Y205 acts as the Proton acceptor in catalysis.

This sequence belongs to the short-chain dehydrogenases/reductases (SDR) family.

Its subcellular location is the endoplasmic reticulum membrane. Its function is as follows. Putative oxidoreductase. The chain is Dehydrogenase/reductase SDR family member 7B from Mus musculus (Mouse).